The chain runs to 254 residues: Proteasome activator complex subunit 3 (254 aa).

Residue alanine 2 is modified to N-acetylalanine. Phosphoserine is present on residues serine 17 and serine 24. N6-acetyllysine; by P300/CBP is present on lysine 195. Phosphoserine; by CHEK2 is present on serine 247.

It belongs to the PA28 family. In terms of assembly, homoheptamer; the stability of the heptamer is essential for the specific activation of the trypsine-like subunit and inhibition of the chymotrypsin-like and postglutamyl-preferring (PGPH) subunits of the proteasome. Interacts with p53/TP53, MDM2 and MAP3K3. Associates with the proteasome. Interacts with CCAR2. Interacts with PSME3IP1 (via C-terminus); the interaction is direct and promotes the association of PSME3 with the 20S proteasome. Interacts with COIL; the interaction is inhibited by PSME3IP1. In terms of processing, phosphorylated by MAP3K3. Phosphorylation at Ser-247 promotes its association with CCAR2. Acetylation at the major site Lys-195 is important for oligomerization and ability to degrade its target substrates. Deacetylated by SIRT1.

It localises to the nucleus. It is found in the cytoplasm. In terms of biological role, subunit of the 11S REG-gamma (also called PA28-gamma) proteasome regulator, a doughnut-shaped homoheptamer which associates with the proteasome. 11S REG-gamma activates the trypsin-like catalytic subunit of the proteasome but inhibits the chymotrypsin-like and postglutamyl-preferring (PGPH) subunits. Facilitates the MDM2-p53/TP53 interaction which promotes ubiquitination- and MDM2-dependent proteasomal degradation of p53/TP53, limiting its accumulation and resulting in inhibited apoptosis after DNA damage. May also be involved in cell cycle regulation. Mediates CCAR2 and CHEK2-dependent SIRT1 inhibition. In Pongo abelii (Sumatran orangutan), this protein is Proteasome activator complex subunit 3 (PSME3).